The chain runs to 280 residues: Intimin (280 aa).

Residues 1-92 (ITEIKADKTT…MLKLLEVEFF (92 aa)) enclose the Big-1 domain. The BIG2 domain maps to 127 to 173 (ANGGNGKYTWYSANPAIASVDPSSGQVTLKDKGETTITVVSGDKQTA). A disulfide bridge connects residues cysteine 201 and cysteine 278.

It belongs to the intimin/invasin family.

Its subcellular location is the cell outer membrane. Its function is as follows. An inverse autotransporter. This Hafnia alvei protein is Intimin (eaeA).